A 263-amino-acid polypeptide reads, in one-letter code: Nicotinamide riboside transporter PnuC (263 aa).

The Cytoplasmic segment spans residues 1–40; the sequence is MQYGMDSFGLRGIPHQVFIKKKEGKIMSLAWWKRELFGGW. The chain crosses the membrane as a helical span at residues 41–61; sequence THFEAVWLLMFLGIQAVVFVF. Residue Asn-62 is a topological domain, periplasmic. Residues 63–83 form a helical membrane-spanning segment; it reads PDSWLASVAAVTGILCVVFVG. Over 84–86 the chain is Cytoplasmic; sequence KGK. Residues 87–107 form a helical membrane-spanning segment; the sequence is ISNYLFGLISVSLYAYVSYTF. The Periplasmic segment spans residues 108–109; sequence KL. Residues 110-131 form a helical membrane-spanning segment; it reads YGEMMLNLLVYVPVQFVGFAMW. Gln-124 serves as a coordination point for beta-nicotinamide D-riboside. The Cytoplasmic portion of the chain corresponds to 132–155; it reads RKHMALGETAETEEVKAKALTVRQ. Residues 156 to 177 form a helical membrane-spanning segment; that stretch reads WLLVVAASVVGTSVYIEWLHHL. Residues 178–180 lie on the Periplasmic side of the membrane; sequence GSA. A helical transmembrane segment spans residues 181-201; it reads LPTLDGVTVVVSIVAQVLMIL. Gln-196 contacts beta-nicotinamide D-riboside. Topologically, residues 202-205 are cytoplasmic; sequence RYRE. Residues 206-226 form a helical membrane-spanning segment; the sequence is QWALWIVVNILTISLWAVAWF. Beta-nicotinamide D-riboside is bound by residues Trp-210 and Asn-214. The Periplasmic segment spans residues 227–232; the sequence is KNGETS. Residues 233–253 traverse the membrane as a helical segment; that stretch reads LPLLLMYVMYLCNSVYGYINW. Residue Tyr-242 participates in beta-nicotinamide D-riboside binding. Over 254-263 the chain is Cytoplasmic; the sequence is TKLVKRHSGQ.

The protein belongs to the nicotinamide ribonucleoside (NR) uptake permease (TC 4.B.1) family. Homotrimer.

It is found in the cell inner membrane. Its function is as follows. Required for nicotinamide riboside transport across the inner membrane. The protein is Nicotinamide riboside transporter PnuC of Neisseria mucosa (strain ATCC 25996 / DSM 4631 / NCTC 10774 / M26).